The following is an 829-amino-acid chain: Leucine--tRNA ligase (829 aa).

The 'HIGH' region motif lies at 40-50; it reads PYPSGNIHMGH. The 'KMSKS' region signature appears at 594–598; sequence KMSKS. Lys597 contributes to the ATP binding site.

Belongs to the class-I aminoacyl-tRNA synthetase family.

The protein localises to the cytoplasm. It carries out the reaction tRNA(Leu) + L-leucine + ATP = L-leucyl-tRNA(Leu) + AMP + diphosphate. This Anaplasma marginale (strain St. Maries) protein is Leucine--tRNA ligase.